The sequence spans 657 residues: Pentatricopeptide repeat-containing protein At5g44230 (657 aa).

PPR repeat units follow at residues 45–79 (KELL…GLDQ), 80–112 (SCYI…VQFR), 113–147 (NPFL…EITP), 148–178 (VSFT…TFRL), 183–213 (FVYV…MPER), 214–244 (DVIS…LPTK), 245–279 (DMVA…GIRA), 280–314 (DEVT…GYSP), 317–347 (HVVI…MNNK), 348–383 (NVFT…EIKP), 384–419 (NTVT…GVQP), and 420–450 (TRDH…MSVE). The type E motif stretch occupies residues 455 to 530 (VWGALLGACR…TPAVSWVVDK (76 aa)). The tract at residues 532-562 (GQMHKFFPGNLNHPMSNKIQDKLEELVERLT) is type E(+) motif. Positions 563–657 (VLGYQPDLSS…SGDCSCGDFW (95 aa)) are type DYW motif.

This sequence belongs to the PPR family. PCMP-H subfamily.

In Arabidopsis thaliana (Mouse-ear cress), this protein is Pentatricopeptide repeat-containing protein At5g44230 (PCMP-H17).